A 156-amino-acid polypeptide reads, in one-letter code: Small ribosomal subunit protein uS7 (156 aa).

It belongs to the universal ribosomal protein uS7 family. As to quaternary structure, part of the 30S ribosomal subunit. Contacts proteins S9 and S11.

Functionally, one of the primary rRNA binding proteins, it binds directly to 16S rRNA where it nucleates assembly of the head domain of the 30S subunit. Is located at the subunit interface close to the decoding center, probably blocks exit of the E-site tRNA. The polypeptide is Small ribosomal subunit protein uS7 (Thiobacillus denitrificans (strain ATCC 25259 / T1)).